The primary structure comprises 247 residues: Adenosylcobinamide-GDP ribazoletransferase (247 aa).

Transmembrane regions (helical) follow at residues 34–54 (IITFPLIGLLLGAISGLVFMA), 59–79 (FGVPLAALFSVLVLALMTGGF), 113–133 (GGLALIFVVLAKILVLSELAL), 138–158 (ILASLAAACAVSRGTAALLMY), and 194–214 (VLLPGMHGVAAMVVTMVAIFI).

This sequence belongs to the CobS family. It depends on Mg(2+) as a cofactor.

The protein resides in the cell inner membrane. It carries out the reaction alpha-ribazole + adenosylcob(III)inamide-GDP = adenosylcob(III)alamin + GMP + H(+). The catalysed reaction is alpha-ribazole 5'-phosphate + adenosylcob(III)inamide-GDP = adenosylcob(III)alamin 5'-phosphate + GMP + H(+). Its pathway is cofactor biosynthesis; adenosylcobalamin biosynthesis; adenosylcobalamin from cob(II)yrinate a,c-diamide: step 7/7. In terms of biological role, joins adenosylcobinamide-GDP and alpha-ribazole to generate adenosylcobalamin (Ado-cobalamin). Also synthesizes adenosylcobalamin 5'-phosphate from adenosylcobinamide-GDP and alpha-ribazole 5'-phosphate. This chain is Adenosylcobinamide-GDP ribazoletransferase, found in Escherichia coli O17:K52:H18 (strain UMN026 / ExPEC).